The sequence spans 147 residues: Cyanate hydratase (147 aa).

Residues R88, E91, and S114 contribute to the active site.

This sequence belongs to the cyanase family.

It catalyses the reaction cyanate + hydrogencarbonate + 3 H(+) = NH4(+) + 2 CO2. Its function is as follows. Catalyzes the reaction of cyanate with bicarbonate to produce ammonia and carbon dioxide. The protein is Cyanate hydratase of Polaromonas sp. (strain JS666 / ATCC BAA-500).